Reading from the N-terminus, the 291-residue chain is NAD kinase (291 aa).

The active-site Proton acceptor is the Asp73. NAD(+)-binding positions include 73–74, 147–148, Arg175, Asp177, and Gln246; these read DG and ND.

This sequence belongs to the NAD kinase family. The cofactor is a divalent metal cation.

It localises to the cytoplasm. The enzyme catalyses NAD(+) + ATP = ADP + NADP(+) + H(+). Functionally, involved in the regulation of the intracellular balance of NAD and NADP, and is a key enzyme in the biosynthesis of NADP. Catalyzes specifically the phosphorylation on 2'-hydroxyl of the adenosine moiety of NAD to yield NADP. In Laribacter hongkongensis (strain HLHK9), this protein is NAD kinase.